A 649-amino-acid chain; its full sequence is ENTH domain-containing protein C19F8.03c (649 aa).

The 135-residue stretch at 2 to 136 folds into the ENTH domain; that stretch reads SPSKWLLTYE…VDYAQVGDAP (135 aa). Disordered regions lie at residues 280–382, 409–440, and 590–649; these read YLQN…NELE, LSAE…PNDS, and FTHG…PFRS. 2 positions are modified to phosphoserine: Ser-285 and Ser-287. The span at 299–308 shows a compositional bias: basic residues; sequence PTLRKKKSIP. Composition is skewed to polar residues over residues 313 to 326 and 340 to 349; these read ESSS…TVQQ and PETQRTTSRI. Acidic residues predominate over residues 352-381; that stretch reads QEEEIKEEEMEGEEEEEEEEVPNYESENEL. Polar residues-rich tracts occupy residues 409-418, 614-624, and 635-649; these read LSAEGTSASP, TPYTASKNPFS, and ARNS…PFRS. Residue Thr-414 is modified to Phosphothreonine. Ser-417 is modified (phosphoserine).

The protein localises to the cytoplasm. The sequence is that of ENTH domain-containing protein C19F8.03c from Schizosaccharomyces pombe (strain 972 / ATCC 24843) (Fission yeast).